The chain runs to 717 residues: Ribosomal RNA large subunit methyltransferase K/L (717 aa).

The 112-residue stretch at 44-155 folds into the THUMP domain; that stretch reads DAYKVCIYSY…KQFVNVFLCL (112 aa).

The protein belongs to the methyltransferase superfamily. RlmKL family.

It is found in the cytoplasm. It catalyses the reaction guanosine(2445) in 23S rRNA + S-adenosyl-L-methionine = N(2)-methylguanosine(2445) in 23S rRNA + S-adenosyl-L-homocysteine + H(+). It carries out the reaction guanosine(2069) in 23S rRNA + S-adenosyl-L-methionine = N(2)-methylguanosine(2069) in 23S rRNA + S-adenosyl-L-homocysteine + H(+). In terms of biological role, specifically methylates the guanine in position 2445 (m2G2445) and the guanine in position 2069 (m7G2069) of 23S rRNA. The sequence is that of Ribosomal RNA large subunit methyltransferase K/L from Francisella tularensis subsp. holarctica (strain FTNF002-00 / FTA).